Consider the following 1497-residue polypeptide: Dual oxidase 1 (1497 aa).

An N-terminal signal peptide occupies residues 1–21 (MRSKHVLYIAILFSSIFGGKG). Over 22-587 (IQQNEEFQRY…MQSTYWTDND (566 aa)) the chain is Extracellular. Positions 26–590 (EEFQRYDGWY…TYWTDNDTTY (565 aa)) are peroxidase-like; mediates peroxidase activity. 4 N-linked (GlcNAc...) asparagine glycosylation sites follow: N66, N305, N567, and N586. The chain crosses the membrane as a helical span at residues 588 to 608 (TTYVFTLIGLACVPLICYGIG). Over 609 to 986 (RYLVNRRIAI…VSAFLETYRQ (378 aa)) the chain is Cytoplasmic. EF-hand domains lie at 817-852 (ANNE…FVNA) and 853-888 (PQKQ…LNQT). The helical transmembrane segment at 987-1007 (HVFIVFCFVAINLVLFFERFW) threads the bilayer. Residues 1008 to 1024 (HYRYMAENRDLRRVMGA) lie on the Extracellular side of the membrane. The chain crosses the membrane as a helical span at residues 1025-1045 (GIAITRGAAGALSFCMALILL). The region spanning 1030 to 1210 (RGAAGALSFC…FVIDRIIGLM (181 aa)) is the Ferric oxidoreductase domain. Topologically, residues 1046–1068 (TVCRNIITLLRETVIAQYIPFDS) are cytoplasmic. Residues 1069 to 1089 (AIAFHKIVALFAAFWATLHTV) form a helical membrane-spanning segment. Residues 1090-1134 (GHCVNFYHVGTQSQEGLACLFQEAFFGSNFLPSISYWFFSTITGL) lie on the Extracellular side of the membrane. A helical membrane pass occupies residues 1135 to 1155 (TGIALVAVMCIIYVFALPCFI). At 1156-1163 (KRAYHAFR) the chain is on the cytoplasmic side. Residues 1164–1184 (LTHLLNIAFYALTLLHGLPKL) form a helical membrane-spanning segment. Residues 1185–1189 (LDSPK) are Extracellular-facing. A helical membrane pass occupies residues 1190 to 1210 (FGYYVVGPIVLFVIDRIIGLM). One can recognise an FAD-binding FR-type domain in the interval 1211–1318 (QYYKKLEIVN…KGPYGDGNQE (108 aa)). Residues 1211-1497 (QYYKKLEIVN…PSFAHRFETF (287 aa)) are Cytoplasmic-facing.

The protein in the N-terminal section; belongs to the peroxidase family. Interacts with doxa-1 and tsp-15. Interacts with rho-1. Expressed in hypodermal cells.

It localises to the membrane. It carries out the reaction NADH + O2 + H(+) = H2O2 + NAD(+). It catalyses the reaction NADPH + O2 + H(+) = H2O2 + NADP(+). Its activity is regulated as follows. Peroxidase activity is inhibited by aminobenzohydrazide. Functionally, plays a role in cuticle biogenesis. In complex with doxa-1 and tsp-15, produces reactive oxygen species (ROS), which are probably used by mlt-7 for tyrosine cross-linking, thus stabilizing cuticular extracellular matrix. May regulate the production of ROS by playing a role in modulating proline catabolism. Required in combination with mlt-7 for correct formation of cross-links in cuticle collagens. Association with the GTPase rho-1 promotes ROS production and this interaction may be modulated by memo-1, in order to control the oxidative stress response and longevity. In Caenorhabditis elegans, this protein is Dual oxidase 1.